Reading from the N-terminus, the 204-residue chain is Glycerol-3-phosphate acyltransferase (204 aa).

Helical transmembrane passes span 8–28, 53–73, 81–101, 116–136, and 155–175; these read ILIF…CYIF, VLAA…VVIA, FITA…IFFG, FGFS…VAII, and VIFT…IIIL.

This sequence belongs to the PlsY family. Probably interacts with PlsX.

The protein resides in the cell inner membrane. The catalysed reaction is an acyl phosphate + sn-glycerol 3-phosphate = a 1-acyl-sn-glycero-3-phosphate + phosphate. Its pathway is lipid metabolism; phospholipid metabolism. In terms of biological role, catalyzes the transfer of an acyl group from acyl-phosphate (acyl-PO(4)) to glycerol-3-phosphate (G3P) to form lysophosphatidic acid (LPA). This enzyme utilizes acyl-phosphate as fatty acyl donor, but not acyl-CoA or acyl-ACP. The protein is Glycerol-3-phosphate acyltransferase of Francisella tularensis subsp. holarctica (strain OSU18).